The chain runs to 129 residues: ATP synthase epsilon chain (129 aa).

Belongs to the ATPase epsilon chain family. F-type ATPases have 2 components, CF(1) - the catalytic core - and CF(0) - the membrane proton channel. CF(1) has five subunits: alpha(3), beta(3), gamma(1), delta(1), epsilon(1). CF(0) has three main subunits: a, b and c.

The protein resides in the cell inner membrane. In terms of biological role, produces ATP from ADP in the presence of a proton gradient across the membrane. The polypeptide is ATP synthase epsilon chain (Campylobacter jejuni subsp. jejuni serotype O:2 (strain ATCC 700819 / NCTC 11168)).